A 365-amino-acid polypeptide reads, in one-letter code: DNA replication and repair protein RecF (365 aa).

30-37 (GQNGSGKT) contributes to the ATP binding site.

The protein belongs to the RecF family.

Its subcellular location is the cytoplasm. Its function is as follows. The RecF protein is involved in DNA metabolism; it is required for DNA replication and normal SOS inducibility. RecF binds preferentially to single-stranded, linear DNA. It also seems to bind ATP. The polypeptide is DNA replication and repair protein RecF (Shewanella woodyi (strain ATCC 51908 / MS32)).